Reading from the N-terminus, the 621-residue chain is Interferon-induced GTP-binding protein Mx1 (621 aa).

One can recognise a Dynamin-type G domain in the interval 31 to 304 (DLALPAIAVI…LVHHIEKSLP (274 aa)). Residues 41 to 48 (GDQSSGKS) form a G1 motif region. 41–48 (GDQSSGKS) provides a ligand contact to GTP. Residues 66–68 (VTR) form a G2 motif region. The interval 142-145 (DLPG) is G3 motif. Residues 142-146 (DLPGI) and 211-214 (TKPD) contribute to the GTP site. Residues 211-214 (TKPD) form a G4 motif region. Positions 243 to 246 (KCRG) are G5 motif. Residues 535 to 621 (LQEMMLHLKS…MKARSYLVEF (87 aa)) enclose the GED domain.

It belongs to the TRAFAC class dynamin-like GTPase superfamily. Dynamin/Fzo/YdjA family.

Its subcellular location is the cytoplasm. Functionally, does not inhibit strain RB-1 of the fish pathogen, infectious hematopoietic necrosis virus (IHNV). In Oncorhynchus mykiss (Rainbow trout), this protein is Interferon-induced GTP-binding protein Mx1 (mx1).